Here is a 457-residue protein sequence, read N- to C-terminus: MKRLAKAAFSQNSLTAPIVSTFVYLISVVRVVLNGNWPVTSSDTAMFQHIGWMVFSGKRYYIDAWDPKPPLTLELATIIAYISNGDPHLQHTLSVVSTIVAGILLTYLISHITSEITGNQFAGLLSGIVFITFPVIHYSAVFGYEPKYFVFLFGLGSIYLSRNPKPILSGAAAAASAGMWQFAIIFPIISFGIISRRKSKDLILKYVFGATIIAFISLLPIYLQGGLVAMTVEVIIAPLYAGETQSFLYRLVKGVTHLKLMIPIALLGMAGILLGFLDDIRERWWVVGLLLWFCIQIFILDYDGADDLFLGIILVSMGIGFAFEKLSTKYESERINSIVTAVVVCMLIWQVVTLGGVGVITNPYSYSGDGPDQAILESGIQQFAHLSGYTEYTIGGSPPDEQYNVKSRYGPDKIEELFFTSTIPSTCHYRLSGMELEWMNLTEQSFTEEKCGKWRLP.

Residues 1–12 (MKRLAKAAFSQN) lie on the Cytoplasmic side of the membrane. Residues 13 to 33 (SLTAPIVSTFVYLISVVRVVL) form a helical membrane-spanning segment. At 34 to 91 (NGNWPVTSSDTAMFQHIGWMVFSGKRYYIDAWDPKPPLTLELATIIAYISNGDPHLQH) the chain is on the extracellular side. A helical transmembrane segment spans residues 92 to 112 (TLSVVSTIVAGILLTYLISHI). Over 113-120 (TSEITGNQ) the chain is Cytoplasmic. The helical transmembrane segment at 121–141 (FAGLLSGIVFITFPVIHYSAV) threads the bilayer. The Extracellular portion of the chain corresponds to 142–173 (FGYEPKYFVFLFGLGSIYLSRNPKPILSGAAA). Residues 174-194 (AASAGMWQFAIIFPIISFGII) form a helical membrane-spanning segment. The Cytoplasmic segment spans residues 195–211 (SRRKSKDLILKYVFGAT). Residues 212-232 (IIAFISLLPIYLQGGLVAMTV) form a helical membrane-spanning segment. Topologically, residues 233–259 (EVIIAPLYAGETQSFLYRLVKGVTHLK) are extracellular. A helical transmembrane segment spans residues 260-280 (LMIPIALLGMAGILLGFLDDI). The Cytoplasmic segment spans residues 281–283 (RER). Residues 284–304 (WWVVGLLLWFCIQIFILDYDG) traverse the membrane as a helical segment. Residues 305 to 307 (ADD) are Extracellular-facing. The helical transmembrane segment at 308–328 (LFLGIILVSMGIGFAFEKLST) threads the bilayer. At 329–337 (KYESERINS) the chain is on the cytoplasmic side. The helical transmembrane segment at 338 to 358 (IVTAVVVCMLIWQVVTLGGVG) threads the bilayer. Residues 359-457 (VITNPYSYSG…EEKCGKWRLP (99 aa)) lie on the Extracellular side of the membrane.

The protein localises to the cell membrane. The protein operates within cell surface structure biogenesis; S-layer biogenesis. It participates in protein modification; protein glycosylation. Involved in the assembly of a N-linked pentasaccharide that decorates the S-layer glycoprotein and flagellins. Transfers mannose, the terminal pentasaccharide residue, from its dedicated dolichol phosphate carrier to the protein-bound glycan comprising the first four subunits of the N-linked pentasaccharide. In Haloferax volcanii (strain ATCC 29605 / DSM 3757 / JCM 8879 / NBRC 14742 / NCIMB 2012 / VKM B-1768 / DS2) (Halobacterium volcanii), this protein is Dolichol phosphate-mannose mannosyltransferase (aglS).